A 490-amino-acid chain; its full sequence is Cobyric acid synthase (490 aa).

The region spanning 251-444 (GLTIAVIHLP…LHGIFANDAF (194 aa)) is the GATase cobBQ-type domain. The active-site Nucleophile is C329. H436 is an active-site residue.

The protein belongs to the CobB/CobQ family. CobQ subfamily.

The protein operates within cofactor biosynthesis; adenosylcobalamin biosynthesis. Catalyzes amidations at positions B, D, E, and G on adenosylcobyrinic A,C-diamide. NH(2) groups are provided by glutamine, and one molecule of ATP is hydrogenolyzed for each amidation. The chain is Cobyric acid synthase from Roseiflexus castenholzii (strain DSM 13941 / HLO8).